We begin with the raw amino-acid sequence, 364 residues long: Alanine racemase (364 aa).

Lysine 34 (proton acceptor; specific for D-alanine) is an active-site residue. Lysine 34 carries the N6-(pyridoxal phosphate)lysine modification. Substrate is bound at residue arginine 129. Tyrosine 259 acts as the Proton acceptor; specific for L-alanine in catalysis. Methionine 307 serves as a coordination point for substrate.

This sequence belongs to the alanine racemase family. It depends on pyridoxal 5'-phosphate as a cofactor.

It catalyses the reaction L-alanine = D-alanine. Its pathway is amino-acid biosynthesis; D-alanine biosynthesis; D-alanine from L-alanine: step 1/1. Catalyzes the interconversion of L-alanine and D-alanine. May also act on other amino acids. The polypeptide is Alanine racemase (alr) (Coxiella burnetii (strain CbuG_Q212) (Coxiella burnetii (strain Q212))).